The primary structure comprises 163 residues: Cytochrome c-type biogenesis protein CcmE (163 aa).

At 1–8 the chain is on the cytoplasmic side; sequence MNPRRKKR. Residues 9 to 29 form a helical; Signal-anchor for type II membrane protein membrane-spanning segment; the sequence is LTIILAISAGLAAVIGLVLYA. The Periplasmic portion of the chain corresponds to 30 to 163; that stretch reads LSQNIDLFYT…TEAQLKGSKQ (134 aa). Heme is bound by residues histidine 131 and tyrosine 135.

This sequence belongs to the CcmE/CycJ family.

It localises to the cell inner membrane. Heme chaperone required for the biogenesis of c-type cytochromes. Transiently binds heme delivered by CcmC and transfers the heme to apo-cytochromes in a process facilitated by CcmF and CcmH. The chain is Cytochrome c-type biogenesis protein CcmE from Aeromonas hydrophila subsp. hydrophila (strain ATCC 7966 / DSM 30187 / BCRC 13018 / CCUG 14551 / JCM 1027 / KCTC 2358 / NCIMB 9240 / NCTC 8049).